Consider the following 233-residue polypeptide: Uracil-DNA glycosylase (233 aa).

The active-site Proton acceptor is Asp70.

This sequence belongs to the uracil-DNA glycosylase (UDG) superfamily. UNG family.

It localises to the cytoplasm. It carries out the reaction Hydrolyzes single-stranded DNA or mismatched double-stranded DNA and polynucleotides, releasing free uracil.. In terms of biological role, excises uracil residues from the DNA which can arise as a result of misincorporation of dUMP residues by DNA polymerase or due to deamination of cytosine. This Helicobacter pylori (strain G27) protein is Uracil-DNA glycosylase.